Here is a 689-residue protein sequence, read N- to C-terminus: Glycine--tRNA ligase beta subunit (689 aa).

Belongs to the class-II aminoacyl-tRNA synthetase family. In terms of assembly, tetramer of two alpha and two beta subunits.

Its subcellular location is the cytoplasm. The catalysed reaction is tRNA(Gly) + glycine + ATP = glycyl-tRNA(Gly) + AMP + diphosphate. This chain is Glycine--tRNA ligase beta subunit, found in Shewanella baltica (strain OS155 / ATCC BAA-1091).